Reading from the N-terminus, the 440-residue chain is Chromosome partition protein MukF (440 aa).

A leucine-zipper region spans residues 208–236; that stretch reads LSETSGTLRELQDTLEAAGDKLQANLLRI.

It belongs to the MukF family. As to quaternary structure, interacts, and probably forms a ternary complex, with MukE and MukB via its C-terminal region. The complex formation is stimulated by calcium or magnesium. It is required for an interaction between MukE and MukB.

It localises to the cytoplasm. Its subcellular location is the nucleoid. Its function is as follows. Involved in chromosome condensation, segregation and cell cycle progression. May participate in facilitating chromosome segregation by condensation DNA from both sides of a centrally located replisome during cell division. Not required for mini-F plasmid partitioning. Probably acts via its interaction with MukB and MukE. Overexpression results in anucleate cells. It has a calcium binding activity. The polypeptide is Chromosome partition protein MukF (Escherichia coli O127:H6 (strain E2348/69 / EPEC)).